A 328-amino-acid polypeptide reads, in one-letter code: Organic solute transporter alpha-like protein (328 aa).

At 1 to 44 the chain is on the extracellular side; that stretch reads MNASENYFTMDPTENISQVLDQNRNNTNSLRTHPTVEEYYENMT. Residues N2, N15, N25, and N42 are each glycosylated (N-linked (GlcNAc...) asparagine). Residues 45 to 65 traverse the membrane as a helical segment; sequence AFLSLAIFIASLLTILNISIF. The Cytoplasmic segment spans residues 66–84; it reads ATTVSRLRRHLDKPLLGPS. A helical transmembrane segment spans residues 85 to 105; the sequence is IMMVGLYPIISVAALVTILVP. Residue Y106 is a topological domain, extracellular. The helical transmembrane segment at 107 to 127 threads the bilayer; the sequence is SWFICHTVMHVMFMVGGPVFR. Over 128-177 the chain is Cytoplasmic; that stretch reads TLLFRYVGSEQNYVKETAGEAVQLNTPPCCCCCLCLPMVIPTKAKLCISR. Residues 178-198 traverse the membrane as a helical segment; sequence YMVWQMPFWQGSIMLVMNILY. The Extracellular portion of the chain corresponds to 199–208; sequence YRDIQLYRQV. Residues 209–229 traverse the membrane as a helical segment; sequence MFFFIPFIVCSIVLGAWSLQI. Topologically, residues 230 to 247 are cytoplasmic; sequence TVRMITKVRGDYQLRKKM. Residues 248-265 form a helical membrane-spanning segment; the sequence is FCLQLVVMLCKLQYLVLY. Residues 266 to 287 are Extracellular-facing; that stretch reads DQLDGIKMGGEYPINHTVYKQT. N280 carries N-linked (GlcNAc...) asparagine glycosylation. Residues 288 to 308 traverse the membrane as a helical segment; the sequence is IINILILVEMVLVSMMVQSAY. The Cytoplasmic segment spans residues 309 to 328; that stretch reads RTPVQVQIDEVNKEKEVTRI.

Belongs to the OST-alpha family.

The protein resides in the cell membrane. Its function is as follows. Probable transporter. The polypeptide is Organic solute transporter alpha-like protein (Drosophila melanogaster (Fruit fly)).